A 123-amino-acid polypeptide reads, in one-letter code: Ragulator complex protein LAMTOR3-B (123 aa).

Belongs to the LAMTOR3 family. Part of the Ragulator complex composed of lamtor1, lamtor2, lamtor3, lamtor4 and lamtor5. The Ragulator complex interacts with slc38a9; the probable amino acid sensor. Component of the lysosomal folliculin complex (LFC).

It is found in the late endosome membrane. Functionally, as part of the Ragulator complex it is involved in amino acid sensing and activation of mTORC1, a signaling complex promoting cell growth in response to growth factors, energy levels, and amino acids. Activated by amino acids through a mechanism involving the lysosomal V-ATPase, the Ragulator plays a dual role for the small GTPases Rag (RagA/RRAGA, RagB/RRAGB, RagC/RRAGC and/or RagD/RRAGD): it (1) acts as a guanine nucleotide exchange factor (GEF), activating the small GTPases Rag and (2) mediates recruitment of Rag GTPases to the lysosome membrane. Activated Ragulator and Rag GTPases function as a scaffold recruiting mTORC1 to lysosomes where it is in turn activated. This is Ragulator complex protein LAMTOR3-B (lamtor3-b) from Xenopus laevis (African clawed frog).